The sequence spans 278 residues: Probable endonuclease 4 (278 aa).

Zn(2+) is bound by residues histidine 69, histidine 109, glutamate 145, aspartate 179, histidine 182, histidine 214, aspartate 227, histidine 229, and glutamate 259.

Belongs to the AP endonuclease 2 family. Zn(2+) serves as cofactor.

It carries out the reaction Endonucleolytic cleavage to 5'-phosphooligonucleotide end-products.. Endonuclease IV plays a role in DNA repair. It cleaves phosphodiester bonds at apurinic or apyrimidinic (AP) sites, generating a 3'-hydroxyl group and a 5'-terminal sugar phosphate. The protein is Probable endonuclease 4 of Bacteroides fragilis (strain ATCC 25285 / DSM 2151 / CCUG 4856 / JCM 11019 / LMG 10263 / NCTC 9343 / Onslow / VPI 2553 / EN-2).